The following is a 461-amino-acid chain: tRNA modification GTPase MnmE (461 aa).

Positions 27, 89, and 128 each coordinate (6S)-5-formyl-5,6,7,8-tetrahydrofolate. Residues 224-382 (GLATAIVGRP…LENAIEQLFF (159 aa)) form the TrmE-type G domain. N234 is a K(+) binding site. GTP-binding positions include 234–239 (NVGKSS), 253–259 (TDIAGTT), and 278–281 (DTAG). Residue S238 coordinates Mg(2+). T253, I255, and T258 together coordinate K(+). Position 259 (T259) interacts with Mg(2+). K461 lines the (6S)-5-formyl-5,6,7,8-tetrahydrofolate pocket.

It belongs to the TRAFAC class TrmE-Era-EngA-EngB-Septin-like GTPase superfamily. TrmE GTPase family. Homodimer. Heterotetramer of two MnmE and two MnmG subunits. Requires K(+) as cofactor.

It localises to the cytoplasm. Its function is as follows. Exhibits a very high intrinsic GTPase hydrolysis rate. Involved in the addition of a carboxymethylaminomethyl (cmnm) group at the wobble position (U34) of certain tRNAs, forming tRNA-cmnm(5)s(2)U34. The polypeptide is tRNA modification GTPase MnmE (Lactobacillus johnsonii (strain CNCM I-12250 / La1 / NCC 533)).